We begin with the raw amino-acid sequence, 143 residues long: Large ribosomal subunit protein uL11 (143 aa).

The protein belongs to the universal ribosomal protein uL11 family. In terms of assembly, part of the ribosomal stalk of the 50S ribosomal subunit. Interacts with L10 and the large rRNA to form the base of the stalk. L10 forms an elongated spine to which L12 dimers bind in a sequential fashion forming a multimeric L10(L12)X complex. Post-translationally, one or more lysine residues are methylated.

Functionally, forms part of the ribosomal stalk which helps the ribosome interact with GTP-bound translation factors. The sequence is that of Large ribosomal subunit protein uL11 from Variovorax paradoxus (strain S110).